A 141-amino-acid chain; its full sequence is Large ribosomal subunit protein uL11 (141 aa).

It belongs to the universal ribosomal protein uL11 family. In terms of assembly, part of the ribosomal stalk of the 50S ribosomal subunit. Interacts with L10 and the large rRNA to form the base of the stalk. L10 forms an elongated spine to which L12 dimers bind in a sequential fashion forming a multimeric L10(L12)X complex. One or more lysine residues are methylated.

In terms of biological role, forms part of the ribosomal stalk which helps the ribosome interact with GTP-bound translation factors. This is Large ribosomal subunit protein uL11 from Chlamydia muridarum (strain MoPn / Nigg).